A 280-amino-acid polypeptide reads, in one-letter code: Shikimate dehydrogenase (NADP(+)) (280 aa).

Residues 15 to 17 and Thr62 each bind shikimate; that span reads SLS. The Proton acceptor role is filled by Lys66. The shikimate site is built by Asn88 and Asp104. NADP(+)-binding positions include 128 to 132, 151 to 156, and Ile222; these read GAGGA and NRTEER. Tyr224 lines the shikimate pocket. Position 245 (Gly245) interacts with NADP(+).

This sequence belongs to the shikimate dehydrogenase family. In terms of assembly, homodimer.

It carries out the reaction shikimate + NADP(+) = 3-dehydroshikimate + NADPH + H(+). Its pathway is metabolic intermediate biosynthesis; chorismate biosynthesis; chorismate from D-erythrose 4-phosphate and phosphoenolpyruvate: step 4/7. Functionally, involved in the biosynthesis of the chorismate, which leads to the biosynthesis of aromatic amino acids. Catalyzes the reversible NADPH linked reduction of 3-dehydroshikimate (DHSA) to yield shikimate (SA). This is Shikimate dehydrogenase (NADP(+)) from Methanosarcina acetivorans (strain ATCC 35395 / DSM 2834 / JCM 12185 / C2A).